The following is a 1893-amino-acid chain: Transcription initiation factor TFIID subunit 1 (1893 aa).

Residues 1 to 435 (MGPGCDLLLR…VTQLHWEDDI (435 aa)) enclose the Protein kinase 1 domain. Phosphoserine; by autocatalysis is present on S137. Disordered stretches follow at residues 155–184 (LMPP…NGEG) and 197–224 (ASEK…AESE). A compositionally biased stretch (pro residues) spans 156–165 (MPPPPPPPGP). A compositionally biased stretch (low complexity) spans 197-208 (ASEKVDFSSSSD). A Phosphoserine; by autocatalysis modification is found at S328. Residues 534 to 557 (IPDEKEEATSNSPSKESKKESSLK) are disordered. The interval 538–997 (KEEATSNSPS…KIPNKPTQQK (460 aa)) is histone acetyltransferase (HAT). At K565 the chain carries N6-acetyllysine. Glycyl lysine isopeptide (Lys-Gly) (interchain with G-Cter in SUMO2) cross-links involve residues K570 and K583. Disordered stretches follow at residues 990–1009 (PNKP…KKTV), 1128–1148 (MLQN…QERK), 1158–1177 (GSAA…VTSL), and 1254–1278 (RLKR…MKER). 2 stretches are compositionally biased toward basic and acidic residues: residues 995-1004 (QQKDDKEPQP) and 1139-1148 (SREREEQERK). A DNA-binding region (HMG box; involved in promoter binding) is located at residues 1216-1294 (VRIRTTKDEE…CGACGAIGHM (79 aa)). The segment covering 1254–1270 (RLKRNQEKEKLKGPPEK) has biased composition (basic and acidic residues). Residues 1363–1650 (VLKFPKQQLP…TAKEAALEEA (288 aa)) are interaction with ASF1A and ASF1B. The short motif at 1372–1379 (PPKKKRRV) is the Nuclear localization signal element. Bromo domains lie at 1397–1505 (RRRT…LKEK) and 1519–1628 (LLDD…LTEY). Positions 1446-1893 (MDLQTLRENV…AGDSDLDSDE (448 aa)) constitute a Protein kinase 2 domain. Residues 1651 to 1676 (ELESLDPMTPGPYTPQPPDLYDTNTS) form a disordered region. Pro residues predominate over residues 1659-1668 (TPGPYTPQPP). Phosphoserine occurs at positions 1690, 1693, 1718, 1721, and 1723. The interval 1696-1893 (DIPSATPEKQ…AGDSDLDSDE (198 aa)) is disordered. 2 stretches are compositionally biased toward acidic residues: residues 1709-1723 (EGED…EEEG) and 1741-1756 (EGED…EEGD). Phosphoserine is present on residues S1799, S1802, and S1820. A compositionally biased stretch (polar residues) spans 1830–1840 (KSNTQDTSFSS). Residues 1846-1857 (VSEEEEDEEEEE) are compositionally biased toward acidic residues. At S1847 the chain carries Phosphoserine. Polar residues predominate over residues 1860 to 1869 (SGPSVLSQVH).

Belongs to the TAF1 family. Component of the TFIID basal transcription factor complex, composed of TATA-box-binding protein TBP, and a number of TBP-associated factors (TAFs), including TAF1, TAF2, TAF3, TAF4, TAF5, TAF6, TAF7, TAF8, TAF9, TAF10, TAF11, TAF12 and TAF13. Interacts with TAF7; the interaction is direct. TAF1, when part of the TFIID complex, interacts with C-terminus of TP53. Part of a TFIID-containing RNA polymerase II pre-initiation complex that is composed of TBP and at least GTF2A1, GTF2A2, GTF2E1, GTF2E2, GTF2F1, GTF2H2, GTF2H3, GTF2H4, GTF2H5, GTF2B, TCEA1, ERCC2, ERCC3, TAF1, TAF2, TAF3, TAF4, TAF5, TAF6, TAF7, TAF8, TAF9, TAF10, TAF11, TAF12 and TAF13. Component of some MLL1/MLL complex, at least composed of the core components KMT2A/MLL1, ASH2L, HCFC1/HCF1, WDR5 and RBBP5, as well as the facultative components BACC1, CHD8, E2F6, HSP70, INO80C, KANSL1, LAS1L, MAX, MCRS1, MGA, KAT8/MOF, PELP1, PHF20, PRP31, RING2, RUVB1/TIP49A, RUVB2/TIP49B, SENP3, TAF1, TAF4, TAF6, TAF7, TAF9 and TEX10. RB1 interacts with the N-terminal domain of TAF1. Interacts with ASF1A and ASF1B. Interacts (via bromo domains) with acetylated lysine residues on the N-terminus of histone H1.4, H2A, H2B, H3 and H4 (in vitro). In terms of assembly, (Microbial infection) Interacts with SV40 Large T antigen. As to quaternary structure, (Microbial infection) Interacts with herpes simplex virus 1 ICP4. Requires Mg(2+) as cofactor. Phosphorylated by casein kinase II in vitro.

Its subcellular location is the nucleus. The catalysed reaction is L-seryl-[protein] + ATP = O-phospho-L-seryl-[protein] + ADP + H(+). It carries out the reaction L-threonyl-[protein] + ATP = O-phospho-L-threonyl-[protein] + ADP + H(+). The enzyme catalyses L-lysyl-[protein] + acetyl-CoA = N(6)-acetyl-L-lysyl-[protein] + CoA + H(+). Its activity is regulated as follows. Autophosphorylates on Ser residues. Inhibited by retinoblastoma tumor suppressor protein, RB1. Binding to TAF7 or CIITA inhibits the histone acetyltransferase activity. Functionally, the TFIID basal transcription factor complex plays a major role in the initiation of RNA polymerase II (Pol II)-dependent transcription. TFIID recognizes and binds promoters with or without a TATA box via its subunit TBP, a TATA-box-binding protein, and promotes assembly of the pre-initiation complex (PIC). The TFIID complex consists of TBP and TBP-associated factors (TAFs), including TAF1, TAF2, TAF3, TAF4, TAF5, TAF6, TAF7, TAF8, TAF9, TAF10, TAF11, TAF12 and TAF13. TAF1 is the largest component and core scaffold of the TFIID complex, involved in nucleating complex assembly. TAF1 forms a promoter DNA binding subcomplex of TFIID, together with TAF7 and TAF2. Contains novel N- and C-terminal Ser/Thr kinase domains which can autophosphorylate or transphosphorylate other transcription factors. Phosphorylates TP53 on 'Thr-55' which leads to MDM2-mediated degradation of TP53. Phosphorylates GTF2A1 and GTF2F1 on Ser residues. Possesses DNA-binding activity. Essential for progression of the G1 phase of the cell cycle. Exhibits histone acetyltransferase activity towards histones H3 and H4. In Homo sapiens (Human), this protein is Transcription initiation factor TFIID subunit 1.